We begin with the raw amino-acid sequence, 468 residues long: Adenosylhomocysteinase (468 aa).

Residues Thr-57, Asp-132, and Glu-194 each coordinate substrate. 195-197 (TTT) lines the NAD(+) pocket. Residues Lys-224 and Asp-228 each contribute to the substrate site. NAD(+) is bound by residues Asn-229, 258–263 (GFGDVG), Glu-281, Asn-316, 337–339 (IGH), and Asn-382.

The protein belongs to the adenosylhomocysteinase family. Requires NAD(+) as cofactor.

It is found in the cytoplasm. It catalyses the reaction S-adenosyl-L-homocysteine + H2O = L-homocysteine + adenosine. Its pathway is amino-acid biosynthesis; L-homocysteine biosynthesis; L-homocysteine from S-adenosyl-L-homocysteine: step 1/1. May play a key role in the regulation of the intracellular concentration of adenosylhomocysteine. The protein is Adenosylhomocysteinase of Methylobacterium nodulans (strain LMG 21967 / CNCM I-2342 / ORS 2060).